The following is a 185-amino-acid chain: dTTP/UTP pyrophosphatase (185 aa).

The active-site Proton acceptor is D67.

The protein belongs to the Maf family. YhdE subfamily. A divalent metal cation serves as cofactor.

The protein resides in the cytoplasm. The catalysed reaction is dTTP + H2O = dTMP + diphosphate + H(+). The enzyme catalyses UTP + H2O = UMP + diphosphate + H(+). Functionally, nucleoside triphosphate pyrophosphatase that hydrolyzes dTTP and UTP. May have a dual role in cell division arrest and in preventing the incorporation of modified nucleotides into cellular nucleic acids. The sequence is that of dTTP/UTP pyrophosphatase from Lacticaseibacillus casei (strain BL23) (Lactobacillus casei).